We begin with the raw amino-acid sequence, 495 residues long: Probable staphylococcal-like nuclease CAN4 (495 aa).

G2 carries N-myristoyl glycine lipidation. A lipid anchor (S-palmitoyl cysteine) is attached at C11. 2 disordered regions span residues 45–68 and 81–101; these read DLQV…RPAL and LQVP…PPRP. The span at 50-66 shows a compositional bias: pro residues; sequence LSPPPPSTRQQQPPPRP. Residues 297 to 470 enclose the TNase-like domain; sequence KTLPVNAKCI…RDARQGLWAY (174 aa). D310 contacts Ca(2+). Residue R377 is part of the active site. D382 contacts Ca(2+). Residues E385 and R419 contribute to the active site.

The protein belongs to the thermonuclease family. The cofactor is Ca(2+).

It is found in the cell membrane. In terms of biological role, enzyme that catalyzes the hydrolysis of both DNA and RNA at the 5' position of the phosphodiester bond. This is Probable staphylococcal-like nuclease CAN4 from Oryza sativa subsp. japonica (Rice).